We begin with the raw amino-acid sequence, 391 residues long: Multidrug resistance protein MdtL (391 aa).

12 helical membrane-spanning segments follow: residues 4-24 (FLIC…MYLV), 42-62 (IAFS…GKVA), 69-89 (PVAI…SLAE), 93-113 (LFLA…VVAF), 131-151 (LLNG…HLIM), 158-178 (SLFW…LFIL), 203-222 (FFLS…LTFV), 245-265 (ALTA…LGIF), 269-289 (TLMI…AVSP), 293-313 (VSLF…GVAM), 331-351 (LGIA…VVGI), and 356-376 (MLIG…MFVA).

The protein belongs to the major facilitator superfamily. DHA1 family. MdtL (TC 2.A.1.2.22) subfamily.

It is found in the cell inner membrane. In terms of biological role, confers resistance to chloramphenicol. The sequence is that of Multidrug resistance protein MdtL from Escherichia coli O17:K52:H18 (strain UMN026 / ExPEC).